Consider the following 177-residue polypeptide: Peptide methionine sulfoxide reductase MsrA (177 aa).

Residue Cys12 is part of the active site.

This sequence belongs to the MsrA Met sulfoxide reductase family.

It carries out the reaction L-methionyl-[protein] + [thioredoxin]-disulfide + H2O = L-methionyl-(S)-S-oxide-[protein] + [thioredoxin]-dithiol. The catalysed reaction is [thioredoxin]-disulfide + L-methionine + H2O = L-methionine (S)-S-oxide + [thioredoxin]-dithiol. In terms of biological role, has an important function as a repair enzyme for proteins that have been inactivated by oxidation. Catalyzes the reversible oxidation-reduction of methionine sulfoxide in proteins to methionine. The polypeptide is Peptide methionine sulfoxide reductase MsrA (Halobacterium salinarum (strain ATCC 29341 / DSM 671 / R1)).